The following is a 229-amino-acid chain: Potassium/proton antiporter CemA (229 aa).

The next 4 helical transmembrane spans lie at 7–27 (FTSLLYLASIVFLPWWISLSF), 114–134 (IICFVILSGYSILGNEELVIL), 145–165 (LSDTIKAFWILLLTDFFIGFH), and 189–209 (ILSSLVCIFPVILDTLFKFWV).

Belongs to the CemA family.

The protein localises to the plastid. It localises to the chloroplast inner membrane. It catalyses the reaction K(+)(in) + H(+)(out) = K(+)(out) + H(+)(in). In terms of biological role, contributes to K(+)/H(+) antiport activity by supporting proton efflux to control proton extrusion and homeostasis in chloroplasts in a light-dependent manner to modulate photosynthesis. Prevents excessive induction of non-photochemical quenching (NPQ) under continuous-light conditions. Indirectly promotes efficient inorganic carbon uptake into chloroplasts. The protein is Potassium/proton antiporter CemA of Daucus carota (Wild carrot).